A 196-amino-acid chain; its full sequence is Nodulation protein A (196 aa).

Belongs to the NodA family.

It localises to the cytoplasm. N-acyltransferase required for nodulation. Acts in the production of a small, heat-stable compound (Nod) that stimulates mitosis in various plant protoplasts. The polypeptide is Nodulation protein A (Mesorhizobium sp. (strain 7653R)).